The chain runs to 301 residues: Transcriptional activator protein NhaR (301 aa).

The region spanning 6–63 (INYNHLYYFWHVYKEGSVVGAAEALYLTPQTITGQIRALEERLQGKLFKRKGRGLEPS) is the HTH lysR-type domain. The segment at residues 23 to 42 (VVGAAEALYLTPQTITGQIR) is a DNA-binding region (H-T-H motif).

Belongs to the LysR transcriptional regulatory family.

It is found in the cytoplasm. In terms of biological role, plays a role in the positive regulation of NhaA. The chain is Transcriptional activator protein NhaR (nhaR) from Escherichia coli (strain K12).